The chain runs to 347 residues: UDP-N-acetylenolpyruvoylglucosamine reductase (347 aa).

An FAD-binding PCMH-type domain is found at 16–187 (AIEQCSHYLV…IAVGLKLPKT (172 aa)). Arg-163 is a catalytic residue. Ser-233 serves as the catalytic Proton donor. Glu-328 is an active-site residue.

This sequence belongs to the MurB family. FAD serves as cofactor.

The protein localises to the cytoplasm. It carries out the reaction UDP-N-acetyl-alpha-D-muramate + NADP(+) = UDP-N-acetyl-3-O-(1-carboxyvinyl)-alpha-D-glucosamine + NADPH + H(+). Its pathway is cell wall biogenesis; peptidoglycan biosynthesis. Functionally, cell wall formation. This Vibrio vulnificus (strain CMCP6) protein is UDP-N-acetylenolpyruvoylglucosamine reductase.